A 178-amino-acid polypeptide reads, in one-letter code: ATP synthase subunit delta (178 aa).

Belongs to the ATPase delta chain family. In terms of assembly, F-type ATPases have 2 components, F(1) - the catalytic core - and F(0) - the membrane proton channel. F(1) has five subunits: alpha(3), beta(3), gamma(1), delta(1), epsilon(1). F(0) has three main subunits: a(1), b(2) and c(10-14). The alpha and beta chains form an alternating ring which encloses part of the gamma chain. F(1) is attached to F(0) by a central stalk formed by the gamma and epsilon chains, while a peripheral stalk is formed by the delta and b chains.

It is found in the cell membrane. Functionally, f(1)F(0) ATP synthase produces ATP from ADP in the presence of a proton or sodium gradient. F-type ATPases consist of two structural domains, F(1) containing the extramembraneous catalytic core and F(0) containing the membrane proton channel, linked together by a central stalk and a peripheral stalk. During catalysis, ATP synthesis in the catalytic domain of F(1) is coupled via a rotary mechanism of the central stalk subunits to proton translocation. This protein is part of the stalk that links CF(0) to CF(1). It either transmits conformational changes from CF(0) to CF(1) or is implicated in proton conduction. In Streptococcus pneumoniae (strain CGSP14), this protein is ATP synthase subunit delta.